The primary structure comprises 223 residues: Ribonuclease T (223 aa).

The Exonuclease domain occupies 20-195; that stretch reads VVIDVETAGF…YDTERTAELF (176 aa). 4 residues coordinate Mg(2+): D23, E25, H182, and D187. H182 acts as the Proton donor/acceptor in catalysis.

The protein belongs to the RNase T family. Homodimer. Mg(2+) is required as a cofactor.

Trims short 3' overhangs of a variety of RNA species, leaving a one or two nucleotide 3' overhang. Responsible for the end-turnover of tRNA: specifically removes the terminal AMP residue from uncharged tRNA (tRNA-C-C-A). Also appears to be involved in tRNA biosynthesis. The chain is Ribonuclease T from Photobacterium profundum (strain SS9).